The chain runs to 375 residues: Fluoride export protein 1 (375 aa).

The Cytoplasmic portion of the chain corresponds to 1-11; sequence MIFNPVISNHK. A helical membrane pass occupies residues 12 to 32; it reads LSHYIHVFCTFTTFCILGTET. Over 33–34 the chain is Extracellular; sequence RQ. Residues 35–55 traverse the membrane as a helical segment; that stretch reads AITALSTYTPAFVTAPTVLWS. Over 56 to 79 the chain is Cytoplasmic; sequence NCSSCMLMGIMQSLNAYTWMKDHQ. Residues 80-100 traverse the membrane as a helical segment; that stretch reads VLFLGVTTGYCGALSSFSSML. The Extracellular portion of the chain corresponds to 101-127; sequence LEMFEHSTNLTNGNIANHTKLPNRAYG. N-linked (GlcNAc...) asparagine glycosylation is found at Asn-109 and Asn-117. Residues 128-148 traverse the membrane as a helical segment; the sequence is IMEFLSVLLVHLMVSMGSLIF. Residues 149–213 lie on the Cytoplasmic side of the membrane; the sequence is GRQLGKEVIV…FKKFFDIVDK (65 aa). A helical transmembrane segment spans residues 214–234; that stretch reads LAYALAFPLIILFVVLCAYYE. Asn-235 carries N-linked (GlcNAc...) asparagine glycosylation. Residues 235–241 lie on the Extracellular side of the membrane; sequence NYSRGKW. The chain crosses the membrane as a helical span at residues 242–262; sequence TLPCLFGIFAGFLRYWLAEMF. The Cytoplasmic segment spans residues 263–268; that stretch reads NKTNKK. A helical transmembrane segment spans residues 269-289; that stretch reads FPLGTFLANVFATLLIGIFTM. Residues 290-310 are Extracellular-facing; it reads VQRGKKHFSTDVPIVNSLNSC. Residues 311 to 331 traverse the membrane as a helical segment; that stretch reads HIVSALISGFCGTLSTISTFI. Residues 332–338 are Cytoplasmic-facing; sequence NEGYKLS. Residues 339-359 form a helical membrane-spanning segment; sequence FINMLIYYTVSIAISYCLLVI. Topologically, residues 360–375 are extracellular; sequence TLGSYAWTRGLTNPIC.

It belongs to the fluoride channel Fluc/FEX (TC 1.A.43) family.

The protein localises to the cell membrane. It catalyses the reaction fluoride(in) = fluoride(out). Its function is as follows. Fluoride channel required for the rapid expulsion of cytoplasmic fluoride. This is Fluoride export protein 1 from Saccharomyces cerevisiae (strain ATCC 204508 / S288c) (Baker's yeast).